Reading from the N-terminus, the 238-residue chain is Probable tetraspanin tspC (238 aa).

The Cytoplasmic portion of the chain corresponds to 1–16 (MVNTRDFLPKTTHYLK). A helical membrane pass occupies residues 17–37 (VPIIGLNAILWLLGLVLIVVG). Residues 38 to 69 (SVCISFFSNFKEFTKESGYKNALSNLTTSAPT) lie on the Extracellular side of the membrane. N-linked (GlcNAc...) asparagine glycosylation occurs at Asn62. Residues 70–90 (GVLVIGIFFILLTLVGCFVAY) traverse the membrane as a helical segment. The Cytoplasmic segment spans residues 91–93 (KEK). A helical transmembrane segment spans residues 94–114 (LVGLVLYTMLMLILLVVLIGI). Over 115 to 197 (GGKALTLDKE…GIFTKQVSSK (83 aa)) the chain is Extracellular. N-linked (GlcNAc...) asparagine glycosylation is found at Asn143 and Asn164. The helical transmembrane segment at 198–218 (LVLVGIAGVVIGCIEFVAMAL) threads the bilayer. The Cytoplasmic segment spans residues 219-238 (SLFLIIRICRSPRSRAYDQY).

This sequence belongs to the tetraspanin (TM4SF) family.

The protein localises to the membrane. The protein is Probable tetraspanin tspC (tspC) of Dictyostelium discoideum (Social amoeba).